A 321-amino-acid chain; its full sequence is Glucan 1,3-beta-glucosidase (321 aa).

Positions 1–21 (MQFLSSFVFAALALLPLSAMA) are cleaved as a signal peptide. Residues asparagine 39 and asparagine 99 are each glycosylated (N-linked (GlcNAc...) asparagine). Glutamate 141 functions as the Proton donor in the catalytic mechanism. Residues asparagine 210, asparagine 213, and asparagine 237 are each glycosylated (N-linked (GlcNAc...) asparagine). Glutamate 244 (nucleophile) is an active-site residue. Asparagine 309 and asparagine 317 each carry an N-linked (GlcNAc...) asparagine glycan.

Belongs to the glycosyl hydrolase 17 family.

The protein localises to the secreted. Its subcellular location is the cell wall. The catalysed reaction is Successive hydrolysis of beta-D-glucose units from the non-reducing ends of (1-&gt;3)-beta-D-glucans, releasing alpha-glucose.. Functionally, glucanases possibly play a role in cell expansion during growth, in cell-cell fusion during mating, and in spore release during sporulation. This enzyme may be involved in beta-glucan degradation and also function biosynthetically as a transglycosylase. This Schizosaccharomyces pombe (strain 972 / ATCC 24843) (Fission yeast) protein is Glucan 1,3-beta-glucosidase (bgl2).